The sequence spans 103 residues: Co-chaperonin GroES (103 aa).

Belongs to the GroES chaperonin family. In terms of assembly, heptamer of 7 subunits arranged in a ring. Interacts with the chaperonin GroEL.

The protein localises to the cytoplasm. Its function is as follows. Together with the chaperonin GroEL, plays an essential role in assisting protein folding. The GroEL-GroES system forms a nano-cage that allows encapsulation of the non-native substrate proteins and provides a physical environment optimized to promote and accelerate protein folding. GroES binds to the apical surface of the GroEL ring, thereby capping the opening of the GroEL channel. This Prochlorococcus marinus (strain MIT 9211) protein is Co-chaperonin GroES.